The primary structure comprises 158 residues: SsrA-binding protein (158 aa).

It belongs to the SmpB family.

It is found in the cytoplasm. In terms of biological role, required for rescue of stalled ribosomes mediated by trans-translation. Binds to transfer-messenger RNA (tmRNA), required for stable association of tmRNA with ribosomes. tmRNA and SmpB together mimic tRNA shape, replacing the anticodon stem-loop with SmpB. tmRNA is encoded by the ssrA gene; the 2 termini fold to resemble tRNA(Ala) and it encodes a 'tag peptide', a short internal open reading frame. During trans-translation Ala-aminoacylated tmRNA acts like a tRNA, entering the A-site of stalled ribosomes, displacing the stalled mRNA. The ribosome then switches to translate the ORF on the tmRNA; the nascent peptide is terminated with the 'tag peptide' encoded by the tmRNA and targeted for degradation. The ribosome is freed to recommence translation, which seems to be the essential function of trans-translation. The polypeptide is SsrA-binding protein (Buchnera aphidicola subsp. Baizongia pistaciae (strain Bp)).